A 138-amino-acid polypeptide reads, in one-letter code: Large ribosomal subunit protein bL17 (138 aa).

It belongs to the bacterial ribosomal protein bL17 family. In terms of assembly, part of the 50S ribosomal subunit. Contacts protein L32.

The protein is Large ribosomal subunit protein bL17 of Buchnera aphidicola subsp. Schizaphis graminum (strain Sg).